The following is a 116-amino-acid chain: MKEKLIELVEKEYLRSDIPQFKAGDTIGVYYKVKEGNKERVQLFEGVVIRVNGGGVAKTFTVRKVTAGIGVERIIPVNSPNIDRIEVLKVGRVRRSKLYYLRGLSAKKARIKEIVK.

It belongs to the bacterial ribosomal protein bL19 family.

In terms of biological role, this protein is located at the 30S-50S ribosomal subunit interface and may play a role in the structure and function of the aminoacyl-tRNA binding site. The protein is Large ribosomal subunit protein bL19 of Fusobacterium nucleatum subsp. nucleatum (strain ATCC 25586 / DSM 15643 / BCRC 10681 / CIP 101130 / JCM 8532 / KCTC 2640 / LMG 13131 / VPI 4355).